We begin with the raw amino-acid sequence, 826 residues long: Disintegrin and metalloproteinase domain-containing protein 8 (826 aa).

Residues M1 to A16 form the signal peptide. Topologically, residues P17–S658 are extracellular. 2 N-linked (GlcNAc...) asparagine glycosylation sites follow: N89 and N260. One can recognise a Peptidase M12B domain in the interval R196–P395. 12 cysteine pairs are disulfide-bonded: C305–C390, C346–C374, C348–C357, C430–C452, C443–C449, C461–C481, C468–C498, C493–C503, C563–C615, C615–C625, C619–C631, and C633–C642. H329 contributes to the Zn(2+) binding site. E330 is a catalytic residue. Zn(2+) is bound by residues H333 and H339. The Disintegrin domain occupies G403 to N489. A glycan (N-linked (GlcNAc...) asparagine) is linked at N431. An EGF-like domain is found at R611 to V643. Residue N614 is glycosylated (N-linked (GlcNAc...) asparagine). Residues L659–Y683 form a helical membrane-spanning segment. At R684–R826 the chain is on the cytoplasmic side. A disordered region spans residues S701–R826. Residues P733–P748 show a composition bias toward pro residues. Residues G749–P763 are compositionally biased toward low complexity.

As to quaternary structure, interacts with FST3. Zn(2+) is required as a cofactor. As to expression, macrophages.

It localises to the membrane. Functionally, possible involvement in extravasation of leukocytes. The protein is Disintegrin and metalloproteinase domain-containing protein 8 (Adam8) of Mus musculus (Mouse).